An 83-amino-acid chain; its full sequence is Small ribosomal subunit protein uS17 (83 aa).

This sequence belongs to the universal ribosomal protein uS17 family. Part of the 30S ribosomal subunit.

In terms of biological role, one of the primary rRNA binding proteins, it binds specifically to the 5'-end of 16S ribosomal RNA. This is Small ribosomal subunit protein uS17 from Campylobacter curvus (strain 525.92).